We begin with the raw amino-acid sequence, 378 residues long: Alcohol dehydrogenase (378 aa).

4 residues coordinate Fe cation: aspartate 195, histidine 199, histidine 262, and histidine 274.

This sequence belongs to the iron-containing alcohol dehydrogenase family. Fe(2+) is required as a cofactor. Mn(2+) serves as cofactor.

It carries out the reaction a primary alcohol + NAD(+) = an aldehyde + NADH + H(+). It catalyses the reaction butan-1-ol + NAD(+) = butanal + NADH + H(+). The catalysed reaction is hexan-1-ol + NAD(+) = hexanal + NADH + H(+). The enzyme catalyses ethanol + NAD(+) = acetaldehyde + NADH + H(+). Functionally, thermostable type III alcohol dehydrogenase. For oxidation activity, the best substrates are 1-butanol and 1-hexanol, followed by ethanol. Shows lower activity with ethylene glycol, isopentanol, isopropanol and glycerol. Displays higher reduction activity in the presence of butanal, followed by acetaldehyde. Has lower activity with hexanal and acetone. In Thermococcus barophilus, this protein is Alcohol dehydrogenase.